A 271-amino-acid polypeptide reads, in one-letter code: Glutamate racemase (271 aa).

Residues 12 to 13 (DS) and 44 to 45 (YG) each bind substrate. Cys-75 serves as the catalytic Proton donor/acceptor. Position 76–77 (76–77 (NS)) interacts with substrate. Cys-185 serves as the catalytic Proton donor/acceptor. Substrate is bound at residue 186–187 (TH).

The protein belongs to the aspartate/glutamate racemases family.

It carries out the reaction L-glutamate = D-glutamate. The protein operates within cell wall biogenesis; peptidoglycan biosynthesis. Functionally, provides the (R)-glutamate required for cell wall biosynthesis. The chain is Glutamate racemase from Mycobacterium bovis (strain ATCC BAA-935 / AF2122/97).